Reading from the N-terminus, the 701-residue chain is MARTTPIGRYRNIGIVAHVDAGKTTTTERVLFYTGKSHKMGEVHDGAATTDWMVQEQERGITITSAAITAFWQGSEKQHKDQYRFNVIDTPGHVDFTIEVERSLRVLDGAVVVFCGTSGVEPQSETVWRQANKYGVPRIVYVNKMDRAGANFLRVIAQIKQRLGHTPVPIQLAIGAEDNFQGQIDLMSMEAVYWNDADKGMVPRREPIPAELQELADEWRSNMVEAAAEASEELMNKYLEGEELTNEEIKAALRQRTIAGEIVLAVCGSSFKNKGVPLVLDAVIDYLPAPTDIPAIKGSDPDNEEVLMERHADDNEPFSALAFKIATDPFVGTLTFVRVYSGVLASGDGVINSVKGKKERVGRMVQMHANAREEIKEVRAGDIAALIGMKDVTTGETLCNADKPIILVRMDFPEPVISVAVEPKTKDDQEKMGIALGKLAQEDPSFRVKTDEETGQTIISGMGELHLDILVDRMRREFNVEANIGKPQVSYRERITKNCEIEGKFVRQSGGRGQFGHCWIRFAPADEGQEGLQFVNEVVGGVVPKEYIPAIQKGIEEQMKNGVVAGYPLIGLKATVFDGSYHDVDSNEMAFKVAASMATKQLAQKGGGELLEPIMAVEVVTPEDYMGDVMGDLNRRRGMILGMEDTVSGKVIRAEVPLGEMFGYATDVRSMSQGRASYSMEFKKYNTAPSHIVETVTKKQG.

The 284-residue stretch at G8–T291 folds into the tr-type G domain. GTP-binding positions include A17–T24, D89–H93, and N143–D146.

Belongs to the TRAFAC class translation factor GTPase superfamily. Classic translation factor GTPase family. EF-G/EF-2 subfamily.

Its subcellular location is the cytoplasm. Catalyzes the GTP-dependent ribosomal translocation step during translation elongation. During this step, the ribosome changes from the pre-translocational (PRE) to the post-translocational (POST) state as the newly formed A-site-bound peptidyl-tRNA and P-site-bound deacylated tRNA move to the P and E sites, respectively. Catalyzes the coordinated movement of the two tRNA molecules, the mRNA and conformational changes in the ribosome. The polypeptide is Elongation factor G (Pseudomonas savastanoi pv. phaseolicola (strain 1448A / Race 6) (Pseudomonas syringae pv. phaseolicola (strain 1448A / Race 6))).